The chain runs to 484 residues: PTS system N-acetylmuramic acid-specific EIIBC component (484 aa).

A PTS EIIB type-1 domain is found at 1-89 (MAKITSNTVS…NQLIDSLTSG (89 aa)). Cysteine 28 serves as the catalytic Phosphocysteine intermediate; for EIIB activity. One can recognise a PTS EIIC type-1 domain in the interval 125 to 484 (SKFATIFTPL…FFGCKDVDLS (360 aa)). A run of 10 helical transmembrane segments spans residues 127–147 (FATI…LLGF), 168–188 (LIAY…ILIG), 194–214 (AFGG…LGYN), 228–248 (FFGF…AAII), 266–286 (MILT…LIIM), 310–330 (AAIL…QGFV), 345–365 (LFPI…ALYF), 379–399 (GAII…VTLP), 409–429 (IGGA…LPVG), and 451–471 (IFPG…VGFL).

It is found in the cell inner membrane. It catalyses the reaction N-acetyl-beta-D-muramate(out) + N(pros)-phospho-L-histidyl-[protein] = N-acetyl-beta-D-muramate 6-phosphate(in) + L-histidyl-[protein]. Functionally, the phosphoenolpyruvate-dependent sugar phosphotransferase system (sugar PTS), a major carbohydrate active transport system, catalyzes the phosphorylation of incoming sugar substrates concomitantly with their translocation across the cell membrane. This system is involved in N-acetylmuramic acid (MurNAc) transport, yielding cytoplasmic MurNAc-6-P. Is also able to take up anhydro-N-acetylmuramic acid (anhMurNAc), but cannot phosphorylate the carbon 6, probably because of the 1,6-anhydro ring. The chain is PTS system N-acetylmuramic acid-specific EIIBC component (murP) from Vibrio parahaemolyticus serotype O3:K6 (strain RIMD 2210633).